Reading from the N-terminus, the 406-residue chain is MDLLLTNARLVTLQSGEMGYQPSTPMSIGIKAGKIHYLGIDTALAATKQIDLKGKLVTPGLIDCHTHLVYAGNRSNEFEMRLQGVPYQEIARQGGGILSTVYATRQASEAQLLEQTLPRLDGLLASGVTSVEVKSGYGLTLVDEIKMLRVAKSLSQHRLVKVTPTLLAAHALPPEFTGRANDYIEFICQEIIPLVAEEQLATSVDVFCESIGFDLAQTERVYACAVEHGLRIKGHTEQLSNLGGTALTARYQGLSADHIEFLDPAGVEALARSSTVATLLPGAFYFLRETQLPPIELLRQFGVPMAIASDVNPGTSPFCDLTLMMNMACTLFRLTPEEALRGVTQNAAQALGYAESRGQIKTGYEADLAIWQIEHPADLSYQVGTQRLFARVVDGQFEQHKECCDE.

Residues histidine 65 and histidine 67 each contribute to the Fe(3+) site. Zn(2+)-binding residues include histidine 65 and histidine 67. Positions 74, 137, and 170 each coordinate 4-imidazolone-5-propanoate. Residue tyrosine 137 participates in N-formimidoyl-L-glutamate binding. Histidine 235 lines the Fe(3+) pocket. Histidine 235 serves as a coordination point for Zn(2+). A 4-imidazolone-5-propanoate-binding site is contributed by glutamine 238. Aspartate 310 serves as a coordination point for Fe(3+). Residue aspartate 310 participates in Zn(2+) binding. Positions 312 and 314 each coordinate N-formimidoyl-L-glutamate. Residue threonine 315 participates in 4-imidazolone-5-propanoate binding.

The protein belongs to the metallo-dependent hydrolases superfamily. HutI family. Requires Zn(2+) as cofactor. Fe(3+) is required as a cofactor.

The protein resides in the cytoplasm. The catalysed reaction is 4-imidazolone-5-propanoate + H2O = N-formimidoyl-L-glutamate. It participates in amino-acid degradation; L-histidine degradation into L-glutamate; N-formimidoyl-L-glutamate from L-histidine: step 3/3. Catalyzes the hydrolytic cleavage of the carbon-nitrogen bond in imidazolone-5-propanoate to yield N-formimidoyl-L-glutamate. It is the third step in the universal histidine degradation pathway. The chain is Imidazolonepropionase from Vibrio vulnificus (strain CMCP6).